Consider the following 92-residue polypeptide: YcgL domain-containing protein ASA_2166 (92 aa).

In terms of domain architecture, YcgL spans 1–85 (MLCAVYKSRK…PPENLLEQHK (85 aa)).

In Aeromonas salmonicida (strain A449), this protein is YcgL domain-containing protein ASA_2166.